A 464-amino-acid chain; its full sequence is Glutamyl-tRNA reductase (464 aa).

Substrate-binding positions include 47–50, Ser145, 150–152, and Gln156; these read TCNR and EPQ. Residue Cys48 is the Nucleophile of the active site. 225–230 is an NADP(+) binding site; the sequence is AAGEMN.

This sequence belongs to the glutamyl-tRNA reductase family. Homodimer.

The enzyme catalyses (S)-4-amino-5-oxopentanoate + tRNA(Glu) + NADP(+) = L-glutamyl-tRNA(Glu) + NADPH + H(+). Its pathway is porphyrin-containing compound metabolism; protoporphyrin-IX biosynthesis; 5-aminolevulinate from L-glutamyl-tRNA(Glu): step 1/2. In terms of biological role, catalyzes the NADPH-dependent reduction of glutamyl-tRNA(Glu) to glutamate 1-semialdehyde (GSA). This is Glutamyl-tRNA reductase from Psychrobacter cryohalolentis (strain ATCC BAA-1226 / DSM 17306 / VKM B-2378 / K5).